The chain runs to 126 residues: Probable flagellum biosynthesis repressor protein FlbT (126 aa).

This sequence belongs to the FlbT family.

Has a post-transcriptional repressor function in flagellum biogenesis. Associates with the 5'-UTR of fljK mRNA and promotes its degradation. This Rhodopseudomonas palustris (strain ATCC BAA-98 / CGA009) protein is Probable flagellum biosynthesis repressor protein FlbT.